Here is a 227-residue protein sequence, read N- to C-terminus: MDIERINDHTMKFFITYIDIEDRGFNREEIWYDRERSEELFWEMMDEARDHDDFFIDGPLWIQVQAVDKGIEVLVTKAELSKDGQKLELPIGVDKIIDIPLDEGIESLFQQELVEEVEEQAGTNFNEDGTFGFLIKFNDFEDVISLSHRLIFEDIKDELYSFEDRYYVYVEFDEVLHDEEEIDRILSIVLEYGEESTLTIHRVSEYGKQIVKEHALETIRNNFPAKT.

It belongs to the MecA family. Homodimer.

In terms of biological role, enables the recognition and targeting of unfolded and aggregated proteins to the ClpC protease or to other proteins involved in proteolysis. Acts negatively in the development of competence by binding ComK and recruiting it to the ClpCP protease. When overexpressed, inhibits sporulation. Also involved in Spx degradation by ClpC. This is Adapter protein MecA 1 (mecA1) from Bacillus anthracis.